Reading from the N-terminus, the 428-residue chain is AP-1 complex subunit mu (428 aa).

A2 is modified (N-acetylalanine; partial). Residues 169-426 form the MHD domain; it reads KNEVFLDVVE…VCLSGDYQFR (258 aa).

Belongs to the adaptor complexes medium subunit family. In terms of assembly, adaptor protein complex 1 (AP-1) is a heterotetramer composed of two large adaptins (gamma-type subunit and beta-type subunit), a medium adaptin (mu-type subunit) and a small adaptin (sigma-type subunit).

The protein localises to the golgi apparatus. It is found in the trans-Golgi network. Its subcellular location is the cytoplasmic vesicle. The protein resides in the clathrin-coated vesicle membrane. Its function is as follows. Subunit of clathrin-associated adaptor protein complex 1 that plays a role in protein sorting in the trans-Golgi network (TGN) and endosomes. The AP complexes mediate the recruitment of clathrin to membranes and the recognition of sorting signals within the cytosolic tails of transmembrane cargo molecules. Also involved in early steps of phagocytosis and macropinocytosis. In Dictyostelium discoideum (Social amoeba), this protein is AP-1 complex subunit mu (apm1).